The following is an 815-amino-acid chain: Lon protease 2 (815 aa).

Residues 19-212 enclose the Lon N-terminal domain; sequence LPVLPLINTV…RLSVVLSQEI (194 aa). 365–372 provides a ligand contact to ATP; sequence GPPGVGKT. In terms of domain architecture, Lon proteolytic spans 601–782; sequence RDEIGVATGM…DEVLPIAFVS (182 aa). Active-site residues include Ser-688 and Lys-731.

This sequence belongs to the peptidase S16 family. As to quaternary structure, homohexamer. Organized in a ring with a central cavity.

Its subcellular location is the cytoplasm. It catalyses the reaction Hydrolysis of proteins in presence of ATP.. ATP-dependent serine protease that mediates the selective degradation of mutant and abnormal proteins as well as certain short-lived regulatory proteins. Required for cellular homeostasis and for survival from DNA damage and developmental changes induced by stress. Degrades polypeptides processively to yield small peptide fragments that are 5 to 10 amino acids long. Binds to DNA in a double-stranded, site-specific manner. The protein is Lon protease 2 of Herpetosiphon aurantiacus (strain ATCC 23779 / DSM 785 / 114-95).